The primary structure comprises 249 residues: Adenosylcobinamide-GDP ribazoletransferase (249 aa).

7 consecutive transmembrane segments (helical) span residues 29 to 49 (LYWF…CAWL), 50 to 70 (PLSI…GFIV), 104 to 124 (VGSF…VAIL), 131 to 151 (AFAL…LLAA), 165 to 185 (GFVG…SLMM), 194 to 214 (PFLL…IGFL), and 226 to 246 (VLGA…GVAF).

It belongs to the CobS family. Mg(2+) is required as a cofactor.

It localises to the cell inner membrane. The enzyme catalyses alpha-ribazole + adenosylcob(III)inamide-GDP = adenosylcob(III)alamin + GMP + H(+). It carries out the reaction alpha-ribazole 5'-phosphate + adenosylcob(III)inamide-GDP = adenosylcob(III)alamin 5'-phosphate + GMP + H(+). It functions in the pathway cofactor biosynthesis; adenosylcobalamin biosynthesis; adenosylcobalamin from cob(II)yrinate a,c-diamide: step 7/7. Joins adenosylcobinamide-GDP and alpha-ribazole to generate adenosylcobalamin (Ado-cobalamin). Also synthesizes adenosylcobalamin 5'-phosphate from adenosylcobinamide-GDP and alpha-ribazole 5'-phosphate. The polypeptide is Adenosylcobinamide-GDP ribazoletransferase (Chlorobium phaeovibrioides (strain DSM 265 / 1930) (Prosthecochloris vibrioformis (strain DSM 265))).